The primary structure comprises 101 residues: Small ribosomal subunit protein uS14 (101 aa).

A disordered region spans residues 1-23 (MAKKSSVEKNKRRRKMVAQQAPK).

The protein belongs to the universal ribosomal protein uS14 family. Part of the 30S ribosomal subunit. Contacts proteins S3 and S10.

Functionally, binds 16S rRNA, required for the assembly of 30S particles and may also be responsible for determining the conformation of the 16S rRNA at the A site. In Rhodospirillum centenum (strain ATCC 51521 / SW), this protein is Small ribosomal subunit protein uS14.